Consider the following 380-residue polypeptide: Succinate--CoA ligase [ADP-forming] subunit beta 2 (380 aa).

The ATP-grasp domain maps to 9–235 (KQIFSKHGIR…YTEADQMERI (227 aa)). Residues K45, 52 to 54 (GRG), E91, I94, and E99 contribute to the ATP site. Residues N191 and D204 each contribute to the Mg(2+) site. Substrate is bound by residues N255 and 312–314 (GIT).

Belongs to the succinate/malate CoA ligase beta subunit family. Heterotetramer of two alpha and two beta subunits. The cofactor is Mg(2+).

The enzyme catalyses succinate + ATP + CoA = succinyl-CoA + ADP + phosphate. The catalysed reaction is GTP + succinate + CoA = succinyl-CoA + GDP + phosphate. It functions in the pathway carbohydrate metabolism; tricarboxylic acid cycle; succinate from succinyl-CoA (ligase route): step 1/1. Succinyl-CoA synthetase functions in the citric acid cycle (TCA), coupling the hydrolysis of succinyl-CoA to the synthesis of either ATP or GTP and thus represents the only step of substrate-level phosphorylation in the TCA. The beta subunit provides nucleotide specificity of the enzyme and binds the substrate succinate, while the binding sites for coenzyme A and phosphate are found in the alpha subunit. In Archaeoglobus fulgidus (strain ATCC 49558 / DSM 4304 / JCM 9628 / NBRC 100126 / VC-16), this protein is Succinate--CoA ligase [ADP-forming] subunit beta 2.